The primary structure comprises 445 residues: Ribosomal protein uS12 methylthiotransferase RimO (445 aa).

The 116-residue stretch at Tyr4–Asn119 folds into the MTTase N-terminal domain. Residues Cys13, Cys48, Cys82, Cys157, Cys161, and Cys164 each coordinate [4Fe-4S] cluster. The 231-residue stretch at Thr143–Glu373 folds into the Radical SAM core domain. Positions Lys376–Asn441 constitute a TRAM domain.

Belongs to the methylthiotransferase family. RimO subfamily. The cofactor is [4Fe-4S] cluster.

It localises to the cytoplasm. The catalysed reaction is L-aspartate(89)-[ribosomal protein uS12]-hydrogen + (sulfur carrier)-SH + AH2 + 2 S-adenosyl-L-methionine = 3-methylsulfanyl-L-aspartate(89)-[ribosomal protein uS12]-hydrogen + (sulfur carrier)-H + 5'-deoxyadenosine + L-methionine + A + S-adenosyl-L-homocysteine + 2 H(+). Its function is as follows. Catalyzes the methylthiolation of an aspartic acid residue of ribosomal protein uS12. In Clostridium perfringens (strain SM101 / Type A), this protein is Ribosomal protein uS12 methylthiotransferase RimO.